A 94-amino-acid chain; its full sequence is uncharacterized protein (94 aa).

Expressed in heart.

This is an uncharacterized protein from Homo sapiens (Human).